A 148-amino-acid chain; its full sequence is MKVVLQKDVLNLGDAGDVKEVADGYARNFLIPRRLAVRANDGNTKAAIHQKRLAELKRDKRVKVMKELSASIDGKTYEIKVKVGENDKLFGSVTANDIALAIKNTGVELDKRKLDLGEPIKSVGEFKIKVRLAEGVVPGIIVKVVGQA.

The protein belongs to the bacterial ribosomal protein bL9 family.

Binds to the 23S rRNA. The protein is Large ribosomal subunit protein bL9 of Leptospira biflexa serovar Patoc (strain Patoc 1 / Ames).